The primary structure comprises 265 residues: Dehydrin COR47 (265 aa).

Basic and acidic residues predominate over residues 1–14; sequence MAEEYKNNVPEHET. The segment at 1-265 is disordered; it reads MAEEYKNNVP…EVKKEKESDD (265 aa). Ala-2 is subject to N-acetylalanine. A compositionally biased stretch (polar residues) spans 16 to 28; it reads TVATEESPATTTE. The span at 29–47 shows a compositional bias: basic and acidic residues; the sequence is VTDRGLFDFLGKKEEEVKP. The residue at position 64 (Ser-64) is a Phosphoserine. Residues 69–79 show a composition bias toward basic and acidic residues; it reads AAEHEEVKENK. Residue Thr-90 is modified to Phosphothreonine. Basic and acidic residues-rich tracts occupy residues 96–105 and 129–156; these read NKPSVIEKLH and IVEG…KTAE. The stretch at 133–153 is repeat 1; sequence EEDKKGLVEKIKEKLPGHHDK. A 3 X 21 AA repeats, Lys-rich region spans residues 133–251; it reads EEDKKGLVEK…KEKLPGYHAK (119 aa). Residues 160–172 show a composition bias toward low complexity; sequence PVSTTIPVPVSES. 2 stretches are compositionally biased toward basic and acidic residues: residues 173-204 and 227-265; these read VVEH…KAED and PVEH…ESDD. 2 tandem repeats follow at residues 180 to 200 and 231 to 251.

This sequence belongs to the plant dehydrin family.

The sequence is that of Dehydrin COR47 (COR47) from Arabidopsis thaliana (Mouse-ear cress).